The sequence spans 457 residues: COBRA-like protein 3 (457 aa).

An N-terminal signal peptide occupies residues 1 to 35 (MAVGGAGSSRSVAPCCCCAVLLAAALLFSAPATTE). N-linked (GlcNAc...) asparagine glycans are attached at residues N45, N170, N178, N217, N242, N258, N326, N341, and N361. A lipid anchor (GPI-anchor amidated asparagine) is attached at N430. A propeptide spans 431 to 457 (ASPLTKQPLTLSVLVFSIVLATLLAYA) (removed in mature form). Residues 437–457 (QPLTLSVLVFSIVLATLLAYA) traverse the membrane as a helical segment.

Belongs to the COBRA family.

The protein resides in the cell membrane. In terms of biological role, involved in determining the orientation of cell expansion, probably by playing an important role in cellulose deposition. May act by recruiting cellulose synthesizing complexes to discrete positions on the cell surface. This is COBRA-like protein 3 (BC1L4) from Oryza sativa subsp. japonica (Rice).